A 224-amino-acid chain; its full sequence is Urease accessory protein UreF (224 aa).

Belongs to the UreF family. In terms of assembly, ureD, UreF and UreG form a complex that acts as a GTP-hydrolysis-dependent molecular chaperone, activating the urease apoprotein by helping to assemble the nickel containing metallocenter of UreC. The UreE protein probably delivers the nickel.

The protein resides in the cytoplasm. Functionally, required for maturation of urease via the functional incorporation of the urease nickel metallocenter. The polypeptide is Urease accessory protein UreF (Pseudomonas savastanoi pv. phaseolicola (strain 1448A / Race 6) (Pseudomonas syringae pv. phaseolicola (strain 1448A / Race 6))).